The chain runs to 434 residues: Putative D-alanyl-D-alanine carboxypeptidase (434 aa).

Residues 7-25 (YLSLLAVSCSVSAAKYPVL) traverse the membrane as a helical; Signal-anchor segment.

The protein belongs to the peptidase S12 family. YfeW subfamily.

The protein localises to the cell inner membrane. It catalyses the reaction Preferential cleavage: (Ac)2-L-Lys-D-Ala-|-D-Ala. Also transpeptidation of peptidyl-alanyl moieties that are N-acyl substituents of D-alanine.. Functionally, penicillin-binding protein. Has low DD-carboxypeptidase activity. The polypeptide is Putative D-alanyl-D-alanine carboxypeptidase (Escherichia coli (strain K12)).